Reading from the N-terminus, the 152-residue chain is Small ribosomal subunit protein uS15 (152 aa).

Basic residues predominate over residues 1-16 (MARIHARRRGKSGSKR). Residues 1–21 (MARIHARRRGKSGSKRIYRDS) are disordered.

It belongs to the universal ribosomal protein uS15 family. As to quaternary structure, part of the 30S ribosomal subunit.

The sequence is that of Small ribosomal subunit protein uS15 from Archaeoglobus fulgidus (strain ATCC 49558 / DSM 4304 / JCM 9628 / NBRC 100126 / VC-16).